A 373-amino-acid polypeptide reads, in one-letter code: MSLLLLLLLVSYYVGTLGTHTEIKRVAEEKVTLPCHHQLGLPEKDTLDIEWLLTDNEGNQKVVITYSSRHVYNNLTEEQKGRVAFASNFLAGDASLQIEPLKPSDEGRYTCKVKNSGRYVWSHVILKVLVRPSKPKCELEGELTEGSDLTLQCESSSGTEPIVYYWQRIREKEGEDERLPPKSRIDYNHPGRVLLQNLTMSYSGLYQCTAGNEAGKESCVVRVTVQYVQSIGMVAGAVTGIVAGALLIFLLVWLLIRRKDKERYEEEERPNEIREDAEAPKARLVKPSSSSSGSRSSRSGSSSTRSTANSASRSQRTLSTDAAPQPGLATQAYSLVGPEVRGSEPKKVHHANLTKAETTPSMIPSQSRAFQTV.

An N-terminal signal peptide occupies residues 1 to 18 (MSLLLLLLLVSYYVGTLG). 2 Ig-like C2-type domains span residues 19–127 (THTE…VILK) and 135–224 (PKCE…VRVT). Residues 19–235 (THTEIKRVAE…QYVQSIGMVA (217 aa)) are Extracellular-facing. Disulfide bonds link Cys35–Cys111 and Cys153–Cys208. 2 N-linked (GlcNAc...) asparagine glycosylation sites follow: Asn74 and Asn197. A helical transmembrane segment spans residues 236–256 (GAVTGIVAGALLIFLLVWLLI). Topologically, residues 257–373 (RRKDKERYEE…PSQSRAFQTV (117 aa)) are cytoplasmic. The span at 264-281 (YEEEERPNEIREDAEAPK) shows a compositional bias: basic and acidic residues. The tract at residues 264–373 (YEEEERPNEI…PSQSRAFQTV (110 aa)) is disordered. The span at 288–314 (SSSSSGSRSSRSGSSSTRSTANSASRS) shows a compositional bias: low complexity. A compositionally biased stretch (polar residues) spans 355–373 (KAETTPSMIPSQSRAFQTV).

Predominantly expressed in epithelial cells within different tissues and in the white adipose tissue. Expressed at high levels in small intestine and placenta, at intermediate levels in the heart, skeletal muscle, colon, spleen, kidney and lung and at low levels in the liver and peripheral blood leukocytes. Highly abundant in the intestine during embryo and fetal development (at protein level).

The protein resides in the cell junction. It is found in the tight junction. Its subcellular location is the cell membrane. Its function is as follows. May be involved in the cell-cell adhesion. May play a role in adipocyte differentiation and development of obesity. Is required for normal small intestine development. The chain is CXADR-like membrane protein (CLMP) from Homo sapiens (Human).